Here is a 56-residue protein sequence, read N- to C-terminus: Cecropin-A2 (56 aa).

Position 55 is an arginine amide (arginine 55).

Belongs to the cecropin family.

The protein localises to the secreted. Its function is as follows. Cecropins have lytic and antibacterial activity against several Gram-positive and Gram-negative bacteria. This is Cecropin-A2 (CecA2) from Drosophila yakuba (Fruit fly).